The primary structure comprises 337 residues: Protein-arginine kinase (337 aa).

Residues 8-239 (VVLSSRIRLA…KQIISSERRA (232 aa)) form the Phosphagen kinase C-terminal domain. ATP is bound by residues 11–15 (SSRIR), histidine 76, arginine 110, 161–165 (RASVM), and 192–197 (RGIYGE). An RDXXRA motif of the pArg binding pocket involved in allosteric regulation motif is present at residues 321-326 (RDVKRA).

The protein belongs to the ATP:guanido phosphotransferase family.

The enzyme catalyses L-arginyl-[protein] + ATP = N(omega)-phospho-L-arginyl-[protein] + ADP + H(+). With respect to regulation, appears to be allosterically activated by the binding of pArg-containing polypeptides to the pArg-binding pocket localized in the C-terminal domain of McsB. In terms of biological role, catalyzes the specific phosphorylation of arginine residues in proteins. This is Protein-arginine kinase from Caldanaerobacter subterraneus subsp. tengcongensis (strain DSM 15242 / JCM 11007 / NBRC 100824 / MB4) (Thermoanaerobacter tengcongensis).